Reading from the N-terminus, the 1393-residue chain is DNA-directed RNA polymerase subunit beta' (1393 aa).

4 residues coordinate Zn(2+): C72, C74, C87, and C90. Mg(2+)-binding residues include D463, D465, and D467. Zn(2+) is bound by residues C812, C887, C894, and C897.

It belongs to the RNA polymerase beta' chain family. The RNAP catalytic core consists of 2 alpha, 1 beta, 1 beta' and 1 omega subunit. When a sigma factor is associated with the core the holoenzyme is formed, which can initiate transcription. Requires Mg(2+) as cofactor. Zn(2+) is required as a cofactor.

The enzyme catalyses RNA(n) + a ribonucleoside 5'-triphosphate = RNA(n+1) + diphosphate. In terms of biological role, DNA-dependent RNA polymerase catalyzes the transcription of DNA into RNA using the four ribonucleoside triphosphates as substrates. This is DNA-directed RNA polymerase subunit beta' from Chlamydia abortus (strain DSM 27085 / S26/3) (Chlamydophila abortus).